We begin with the raw amino-acid sequence, 313 residues long: Sororin-like protein 1 (313 aa).

Residues 44 to 46 carry the FGF motif motif; sequence FGF. Residues 105-287 form a disordered region; that stretch reads ADENQQSVPT…NDNLKELTPG (183 aa). Positions 107–118 are enriched in polar residues; the sequence is ENQQSVPTVSIA. A compositionally biased stretch (pro residues) spans 123-134; it reads PELPPSSSPLLP. Over residues 135-154 the composition is skewed to low complexity; that stretch reads PNGSESSSPIPLSLLSTSSL. A compositionally biased stretch (polar residues) spans 155–170; sequence QQRKITPSNLSNTSKP. Residues 184 to 196 show a composition bias toward basic residues; sequence HGHHLTRLRKKRR. The segment covering 249–264 has biased composition (basic and acidic residues); that stretch reads EKKILKTYHSQDKDTA. Residues 288-310 form a C-terminal Sororin domain region; sequence KKEYLKSIKKYFQDVDDYQLHVV.

It belongs to the sororin family. As to quaternary structure, interacts with Pds5 and Psm3.

It is found in the nucleus. Regulator of sister chromatid cohesion in mitosis stabilizing cohesin complex association with chromatin. Antagonizes the action of wpl1 which stimulates cohesin dissociation from chromatin. Cohesion ensures that chromosome partitioning is accurate in dividing cells and may play an important role in DNA repair. The sequence is that of Sororin-like protein 1 from Schizosaccharomyces pombe (strain 972 / ATCC 24843) (Fission yeast).